Consider the following 376-residue polypeptide: MTAIYIGVMTGTSMDGVDFVAASFDPLHIHATLTLPFEPALRDELMALTLPGDNEIDRMGKADVGLAKLIGHGINMLIEQNHLDRHVIKAIGSHGQTIRHRPEHGFTLQIGDPHIITELTGIPVISDFRRRDMAAGGQGAPLVPAFHQAIFQHSTIHRVILNLGGIANVSLLPAGNPDGVYGFDTGPANILMDAWCERYTGHPYDENGNWAAYGQPIRALLERLQAHEFFSKKPPKSTGREDFNLDWLDDQLADWRNDELEYDELEDTPENVQATLLKLTTRAIKKAIYRSELDTGEVYVCGGGAYNSHLLEQLRWRLRKHHWSVQSTSVLGLSPTWVEATAFAWLAMRFMQQQSANLPSVTGAAGFRILGTITSV.

11–18 (GTSMDGVD) is a binding site for ATP.

This sequence belongs to the anhydro-N-acetylmuramic acid kinase family.

The catalysed reaction is 1,6-anhydro-N-acetyl-beta-muramate + ATP + H2O = N-acetyl-D-muramate 6-phosphate + ADP + H(+). The protein operates within amino-sugar metabolism; 1,6-anhydro-N-acetylmuramate degradation. It participates in cell wall biogenesis; peptidoglycan recycling. In terms of biological role, catalyzes the specific phosphorylation of 1,6-anhydro-N-acetylmuramic acid (anhMurNAc) with the simultaneous cleavage of the 1,6-anhydro ring, generating MurNAc-6-P. Is required for the utilization of anhMurNAc either imported from the medium or derived from its own cell wall murein, and thus plays a role in cell wall recycling. This chain is Anhydro-N-acetylmuramic acid kinase, found in Acinetobacter baylyi (strain ATCC 33305 / BD413 / ADP1).